The following is an 809-amino-acid chain: G-type lectin S-receptor-like serine/threonine-protein kinase At1g61480 (809 aa).

A signal peptide spans 1 to 24; it reads MGKKRIMFFASLLLITIFLSFSYA. In terms of domain architecture, Bulb-type lectin spans 25-144; sequence GITRESPLSI…NSGRTLWESF (120 aa). The Extracellular segment spans residues 25-425; it reads GITRESPLSI…SELGGNKRNK (401 aa). Asn53, Asn88, Asn94, Asn103, Asn117, Asn134, and Asn236 each carry an N-linked (GlcNAc...) asparagine glycan. Residues 278 to 314 form the EGF-like domain; that stretch reads PENSCDIYGFCGPFGICVMSVPPKCKCFKGFVPKSIE. Intrachain disulfides connect Cys282–Cys294 and Cys288–Cys302. Asn320 and Asn375 each carry an N-linked (GlcNAc...) asparagine glycan. One can recognise a PAN domain in the interval 333 to 415; the sequence is CQGNTNGKTV…GEILSIRLAS (83 aa). Cystine bridges form between Cys368-Cys389 and Cys372-Cys378. The helical transmembrane segment at 426–446 threads the bilayer; the sequence is IIVASIVSLSLFVILAFAAFC. The Cytoplasmic portion of the chain corresponds to 447–809; sequence FLRYKVKHTV…EMTQSVILGR (363 aa). In terms of domain architecture, Protein kinase spans 496–781; sequence FSLSNKLGQG…DLTSPKQPTF (286 aa). ATP is bound by residues 502–510 and Lys524; that span reads LGQGGFGSV. Ser530 and Ser545 each carry phosphoserine. The interval 585–602 is caM-binding; the sequence is RKRLEIDWPKRFNIIEGI. The active-site Proton acceptor is the Asp621. Ser625 and Ser638 each carry phosphoserine. At Thr655 the chain carries Phosphothreonine. Phosphoserine is present on residues Ser698 and Ser792.

It belongs to the protein kinase superfamily. Ser/Thr protein kinase family.

Its subcellular location is the cell membrane. It catalyses the reaction L-seryl-[protein] + ATP = O-phospho-L-seryl-[protein] + ADP + H(+). The catalysed reaction is L-threonyl-[protein] + ATP = O-phospho-L-threonyl-[protein] + ADP + H(+). The polypeptide is G-type lectin S-receptor-like serine/threonine-protein kinase At1g61480 (Arabidopsis thaliana (Mouse-ear cress)).